We begin with the raw amino-acid sequence, 703 residues long: Glycine--tRNA ligase beta subunit (703 aa).

This sequence belongs to the class-II aminoacyl-tRNA synthetase family. In terms of assembly, tetramer of two alpha and two beta subunits.

It is found in the cytoplasm. The catalysed reaction is tRNA(Gly) + glycine + ATP = glycyl-tRNA(Gly) + AMP + diphosphate. The polypeptide is Glycine--tRNA ligase beta subunit (Myxococcus xanthus (strain DK1622)).